The primary structure comprises 219 residues: Probable glutathione S-transferase GSTF1 (219 aa).

The GST N-terminal domain maps to 2–83 (TPVKVFGPAQ…YILRKYKTRE (82 aa)). Glutathione-binding positions include Ser-12, 41 to 42 (HK), 54 to 55 (QI), and 67 to 68 (ES). The 129-residue stretch at 91–219 (NLREAAMVDV…LAAVMAPQGA (129 aa)) folds into the GST C-terminal domain.

The protein belongs to the GST superfamily. Phi family. In terms of tissue distribution, constitutively expressed in roots.

It catalyses the reaction RX + glutathione = an S-substituted glutathione + a halide anion + H(+). Functionally, conjugation of reduced glutathione to a wide number of exogenous and endogenous hydrophobic electrophiles. The sequence is that of Probable glutathione S-transferase GSTF1 (GSTF1) from Oryza sativa subsp. japonica (Rice).